The chain runs to 223 residues: Putative oxidoreductase MT1904 (223 aa).

4–28 contacts NADP(+); sequence LVTGGDTDLGRTMAEGFRNDGHKVT. Position 128 (serine 128) interacts with substrate.

The protein belongs to the short-chain dehydrogenases/reductases (SDR) family.

This is Putative oxidoreductase MT1904 from Mycobacterium tuberculosis (strain CDC 1551 / Oshkosh).